A 257-amino-acid chain; its full sequence is Chymotrypsin-like elastase family member 3B (257 aa).

A signal peptide (or 3) is located at residues 1–2 (VA). Positions 3–15 (SGYGPPSSHPSSR) are cleaved as a propeptide — activation peptide. The Peptidase S1 domain maps to 16-255 (VVNGEDAVPY…FIDWIEETIA (240 aa)). An N-linked (GlcNAc...) asparagine glycan is attached at asparagine 38. Disulfide bonds link cysteine 45-cysteine 61 and cysteine 104-cysteine 107. The active-site Charge relay system is the histidine 60. Aspartate 110 functions as the Charge relay system in the catalytic mechanism. Intrachain disulfides connect cysteine 144–cysteine 210, cysteine 175–cysteine 191, and cysteine 200–cysteine 231. Serine 204 acts as the Charge relay system in catalysis.

Belongs to the peptidase S1 family. Elastase subfamily.

The catalysed reaction is Preferential cleavage: Ala-|-Xaa. Does not hydrolyze elastin.. Functionally, efficient protease with alanine specificity but only little elastolytic activity. This Macaca mulatta (Rhesus macaque) protein is Chymotrypsin-like elastase family member 3B (CELA3B).